We begin with the raw amino-acid sequence, 294 residues long: MTKTYRISSGLLREAVKKITIARDSAFFVDKEILSKSSELKNSLINPCHNVVREFVRESRDCDSDDYKREYRLNDYRLELTQPPSNISRGVIVVKTVRRWELINQKYNADLWIPPAKKGVVITPDIIDKLYLFWDNFLGSYEKEGINRKQNTDPVSKGKVFDLLASRSSNNTNQTPEELREIQTQIEHLTIHFDEGSVHESAGQLKGKFFNKDRQSARDYLLDKLKDDKDKDIVRGMGTYTLECVAIHVLSKLFNVFSLEKTSVLAAALISELDITAKTEYNNALLAKMQREKE.

Its subcellular location is the mitochondrion. This is an uncharacterized protein from Zea mays (Maize).